A 142-amino-acid chain; its full sequence is MRGILVALTAALIFCSLTPAQPVLHIQETNRAKNRANRKLVARQPEYKAVETLEKNVNIAIAVGTALVTLVSAGVGGMLLSDHLACKSVAKQEEIMQKSWDSMHPDGFTPAGDQMRPVSFDCSTQERGLKPLQSYTNGAEMY.

Residues 1–20 (MRGILVALTAALIFCSLTPA) form the signal peptide. Residues 59-79 (IAIAVGTALVTLVSAGVGGML) form a helical membrane-spanning segment.

As to quaternary structure, monomer.

It localises to the membrane. In terms of biological role, during infection, may play a role in establishing and maintaining biotrophy; the formation of a tight interaction zone between the host and the pathogen. The sequence is that of Virulence-associated membrane protein 1 from Mycosarcoma maydis (Corn smut fungus).